Consider the following 168-residue polypeptide: Protein-export protein SecB (168 aa).

Belongs to the SecB family. As to quaternary structure, homotetramer, a dimer of dimers. One homotetramer interacts with 1 SecA dimer.

It is found in the cytoplasm. Functionally, one of the proteins required for the normal export of preproteins out of the cell cytoplasm. It is a molecular chaperone that binds to a subset of precursor proteins, maintaining them in a translocation-competent state. It also specifically binds to its receptor SecA. This chain is Protein-export protein SecB, found in Thioalkalivibrio sulfidiphilus (strain HL-EbGR7).